Here is a 119-residue protein sequence, read N- to C-terminus: Holo-[acyl-carrier-protein] synthase (119 aa).

The Mg(2+) site is built by D5 and E51.

This sequence belongs to the P-Pant transferase superfamily. AcpS family. The cofactor is Mg(2+).

It localises to the cytoplasm. It carries out the reaction apo-[ACP] + CoA = holo-[ACP] + adenosine 3',5'-bisphosphate + H(+). Transfers the 4'-phosphopantetheine moiety from coenzyme A to a Ser of acyl-carrier-protein. The polypeptide is Holo-[acyl-carrier-protein] synthase (Helicobacter pylori (strain G27)).